Reading from the N-terminus, the 200-residue chain is Imidazoleglycerol-phosphate dehydratase (200 aa).

This sequence belongs to the imidazoleglycerol-phosphate dehydratase family.

The protein localises to the cytoplasm. The enzyme catalyses D-erythro-1-(imidazol-4-yl)glycerol 3-phosphate = 3-(imidazol-4-yl)-2-oxopropyl phosphate + H2O. It functions in the pathway amino-acid biosynthesis; L-histidine biosynthesis; L-histidine from 5-phospho-alpha-D-ribose 1-diphosphate: step 6/9. The sequence is that of Imidazoleglycerol-phosphate dehydratase from Chlorobium phaeobacteroides (strain DSM 266 / SMG 266 / 2430).